Reading from the N-terminus, the 177-residue chain is Large ribosomal subunit protein uL6 (177 aa).

Belongs to the universal ribosomal protein uL6 family. Part of the 50S ribosomal subunit.

Its function is as follows. This protein binds to the 23S rRNA, and is important in its secondary structure. It is located near the subunit interface in the base of the L7/L12 stalk, and near the tRNA binding site of the peptidyltransferase center. This Pseudomonas putida (strain ATCC 700007 / DSM 6899 / JCM 31910 / BCRC 17059 / LMG 24140 / F1) protein is Large ribosomal subunit protein uL6.